We begin with the raw amino-acid sequence, 122 residues long: Large ribosomal subunit protein bL19 (122 aa).

The protein belongs to the bacterial ribosomal protein bL19 family.

In terms of biological role, this protein is located at the 30S-50S ribosomal subunit interface and may play a role in the structure and function of the aminoacyl-tRNA binding site. The sequence is that of Large ribosomal subunit protein bL19 from Mycoplasmoides gallisepticum (strain R(low / passage 15 / clone 2)) (Mycoplasma gallisepticum).